Consider the following 263-residue polypeptide: DNA repair protein RecO (263 aa).

The tract at residues 243–263 (DRKETARETVPTSDGTASNAV) is disordered. Positions 252-263 (VPTSDGTASNAV) are enriched in polar residues.

Belongs to the RecO family.

In terms of biological role, involved in DNA repair and RecF pathway recombination. This chain is DNA repair protein RecO, found in Neisseria meningitidis serogroup C / serotype 2a (strain ATCC 700532 / DSM 15464 / FAM18).